The following is a 334-amino-acid chain: Holliday junction branch migration complex subunit RuvB (334 aa).

Residues 4-186 (ADRLIAPENP…FGITQRLEYY (183 aa)) form a large ATPase domain (RuvB-L) region. Residues Ile25, Arg26, Gly67, Lys70, Thr71, Thr72, 133 to 135 (EDY), Arg176, Tyr186, and Arg223 contribute to the ATP site. Mg(2+) is bound at residue Thr71. The interval 187–257 (KVKDLQDIVQ…TADKALNMLD (71 aa)) is small ATPAse domain (RuvB-S). The interval 260-334 (AEGFDYMDRK…RAYLHFGIEK (75 aa)) is head domain (RuvB-H). Residues Arg315 and Arg320 each contribute to the DNA site.

This sequence belongs to the RuvB family. Homohexamer. Forms an RuvA(8)-RuvB(12)-Holliday junction (HJ) complex. HJ DNA is sandwiched between 2 RuvA tetramers; dsDNA enters through RuvA and exits via RuvB. An RuvB hexamer assembles on each DNA strand where it exits the tetramer. Each RuvB hexamer is contacted by two RuvA subunits (via domain III) on 2 adjacent RuvB subunits; this complex drives branch migration. In the full resolvosome a probable DNA-RuvA(4)-RuvB(12)-RuvC(2) complex forms which resolves the HJ.

It localises to the cytoplasm. It catalyses the reaction ATP + H2O = ADP + phosphate + H(+). In terms of biological role, the RuvA-RuvB-RuvC complex processes Holliday junction (HJ) DNA during genetic recombination and DNA repair, while the RuvA-RuvB complex plays an important role in the rescue of blocked DNA replication forks via replication fork reversal (RFR). RuvA specifically binds to HJ cruciform DNA, conferring on it an open structure. The RuvB hexamer acts as an ATP-dependent pump, pulling dsDNA into and through the RuvAB complex. RuvB forms 2 homohexamers on either side of HJ DNA bound by 1 or 2 RuvA tetramers; 4 subunits per hexamer contact DNA at a time. Coordinated motions by a converter formed by DNA-disengaged RuvB subunits stimulates ATP hydrolysis and nucleotide exchange. Immobilization of the converter enables RuvB to convert the ATP-contained energy into a lever motion, pulling 2 nucleotides of DNA out of the RuvA tetramer per ATP hydrolyzed, thus driving DNA branch migration. The RuvB motors rotate together with the DNA substrate, which together with the progressing nucleotide cycle form the mechanistic basis for DNA recombination by continuous HJ branch migration. Branch migration allows RuvC to scan DNA until it finds its consensus sequence, where it cleaves and resolves cruciform DNA. This chain is Holliday junction branch migration complex subunit RuvB, found in Vibrio campbellii (strain ATCC BAA-1116).